The sequence spans 804 residues: Probable replication endonuclease from prophage-like region (804 aa).

Catalysis depends on O-(5'-phospho-DNA)-tyrosine intermediate residues Tyr-498 and Tyr-502.

Belongs to the phage GPA family.

Its function is as follows. Possible endonuclease which induces a single-strand cut and initiates DNA replication. The polypeptide is Probable replication endonuclease from prophage-like region (Escherichia coli O6:H1 (strain CFT073 / ATCC 700928 / UPEC)).